The sequence spans 772 residues: Transducin-like enhancer protein 4 (772 aa).

2 disordered regions span residues 1-24 (MIRD…PAQP) and 183-359 (LPIK…LTGL). The q domain stretch occupies residues 1–137 (MIRDLSKMYP…AIIGQQLQAQ (137 aa)). The interval 138–205 (HLSHAHGLPV…HQRDRDSIKS (68 aa)) is GP domain. Residues 184 to 203 (PIKDEKKHHDSDHQRDRDSI) show a composition bias toward basic and acidic residues. Residues 204-213 (KSSSVSPSAS) are compositionally biased toward low complexity. A ccN domain region spans residues 206-275 (SSVSPSASFR…SPRGSPAHSP (70 aa)). Basic and acidic residues-rich tracts occupy residues 216 to 253 (AAEK…KSDD) and 274 to 290 (SPRE…KKDA). An SP domain region spans residues 276 to 452 (RENGLDKPRL…GGKPAYSFHV (177 aa)). The span at 291 to 306 (PISPASIASSSSTPSS) shows a compositional bias: low complexity. Residues 307–316 (KSKEHSHNEK) show a composition bias toward basic and acidic residues. The span at 318–329 (TTPVSKSNTPTP) shows a compositional bias: polar residues. 7 WD repeats span residues 484–522 (NHGE…NKSP), 530–569 (NRDN…PRIK), 574–613 (SSAP…LVRQ), 616–655 (GHTD…QLQQ), 657–696 (DFTS…KYQL), 698–737 (LHES…SIFQ), and 739–772 (KESS…EVIY).

Belongs to the WD repeat Groucho/TLE family. In terms of assembly, interacts with tcf7, tcf7l1, ripply2.2/bowline, dscr6/ripply3 and foxd3. Associates with tbx6 in the presence of ripply2.2/bowline. Interacts with EFNB1 through the SP domain. In terms of processing, ubiquitinated by XIAP/BIRC4. As to expression, expressed at high levels in the spleen and ovary.

It is found in the nucleus. In terms of biological role, transcriptional corepressor. Functions with ripply2.2/bowline to down regulate transcription of tbx6-dependent gene expression. Represses transcription of siamois and nodal3. The chain is Transducin-like enhancer protein 4 (tle4) from Xenopus laevis (African clawed frog).